A 149-amino-acid polypeptide reads, in one-letter code: MNKGQRHIKIREIIMNHDIETQDELVDRLREAGFNVTQATVSRDIKEMQLVKVPMANGRYKYSLPSDQRFNPLQKLKRALVDVFVKLDGTGNLLVLRTLPGNAHAVGVLLDNLDWNEIVGTICGDDTCLIICRTPKDAEKVSDQLLSML.

It belongs to the ArgR family.

It localises to the cytoplasm. It participates in amino-acid biosynthesis; L-arginine biosynthesis [regulation]. In terms of biological role, regulates arginine biosynthesis genes. The protein is Arginine repressor of Geobacillus kaustophilus (strain HTA426).